Consider the following 1055-residue polypeptide: Cell-division control histidine kinase PdhS (1055 aa).

Positions 1 to 626 (MSGSYPFIDI…RANGSEEPVD (626 aa)) are important for polar localization. A disordered region spans residues 419–439 (DDSPVATLPKPPLDIAPTPGR). Positions 627-1055 (AHLNAISWRE…AFPPTRVLAD (429 aa)) are interaction with DivK. One can recognise a PAS domain in the interval 679–750 (HVEELKTILD…YLHGLSGNGV (72 aa)). The 230-residue stretch at 822–1051 (RISHEIRTPL…VVEIAFPPTR (230 aa)) folds into the Histidine kinase domain. The residue at position 825 (His825) is a Phosphohistidine; by autocatalysis.

In terms of assembly, interacts with DivK.

The protein localises to the cytoplasm. The enzyme catalyses ATP + protein L-histidine = ADP + protein N-phospho-L-histidine.. Functionally, functions as a polar differentiation marker. Essential protein that, by localizing in the old pole of dividing cells, controls cell division and maturation, probably through control of DivK phosphorylation status and cellular distribution, which in turn regulates CtrA, a transcriptional regulator of the minB operon. The asymmetrical localization of this protein is probably required for cells to enter a new division cycle. This Brucella anthropi (strain ATCC 49188 / DSM 6882 / CCUG 24695 / JCM 21032 / LMG 3331 / NBRC 15819 / NCTC 12168 / Alc 37) (Ochrobactrum anthropi) protein is Cell-division control histidine kinase PdhS (pdhS).